Consider the following 410-residue polypeptide: Cathepsin D (410 aa).

The N-terminal stretch at 1–18 (MQPPSLLLLVLGLLAAPA) is a signal peptide. Residues 19 to 64 (AALVRIPLHKFTSVRRTMTELGGPVEDLIAKGPISKYAQGAPAVTG) constitute a propeptide, activation peptide. Positions 79–405 (YYGEIGIGTP…DRDQNRVGLA (327 aa)) constitute a Peptidase A1 domain. Cystine bridges form between C91-C160 and C110-C117. D97 is an active-site residue. N-linked (GlcNAc...) asparagine glycosylation is found at N134 and N261. C284 and C288 are disulfide-bonded. D293 is a catalytic residue. C327 and C364 are disulfide-bonded.

The protein belongs to the peptidase A1 family. As to quaternary structure, consists of a light chain and a heavy chain. Interacts with ADAM30; this leads to activation of CTSD. Interacts with GRN; stabilizes CTSD; increases its proteolytic activity. Post-translationally, N- and O-glycosylated. Undergoes proteolytic cleavage and activation by ADAM30.

The protein resides in the lysosome. It localises to the melanosome. Its subcellular location is the secreted. It is found in the extracellular space. It catalyses the reaction Specificity similar to, but narrower than, that of pepsin A. Does not cleave the 4-Gln-|-His-5 bond in B chain of insulin.. Functionally, acid protease active in intracellular protein breakdown. Plays a role in APP processing following cleavage and activation by ADAM30 which leads to APP degradation. This chain is Cathepsin D (CTSD), found in Canis lupus familiaris (Dog).